A 534-amino-acid polypeptide reads, in one-letter code: MKYIVVTGGVMSGLGKGITIASIGRNLKNKGYKVTAIKIDPYINIDAGTMSPYQHGEVFVLRDGGEVDLDLGNYERFLDTELTRDHNLTTGKIYQEVIAKERRGDYLGKTVQIIPHITNEIKSRIRKVAARSGADVCLVEIGGTVGDIESMPFLEAVRQMHREEPSENIVFIHVTLVMEDLQGEQKTKPSQHSVKELRALGLSPEVIVTRSKTPLQESAKEKIALFCDVPQELVISAHDAADIYEVPLEIEEQGLTTRLMKHLKLESSVEDNGWREMVSRMKSTTEEVKLAIVGKYTNLEDSYLSILEAVKHGGIDNGCKVEVNMVEAETLEEDPAEIEKLRQFDGILIPGGFGGRGTEGKMLAIKFARENDVPFLGICLGMQLAVIEFARNVVNLENANSTEFDEDTPYPVIDILPEQTGVADMGGTMRLGDYDAILKDGSLATKLYGTNYIVERHRHRYEVNPEFVDRLESFGIVFSGKNKNRMEIAEIPDKRFFFASQFHPEFRSRPGRPSPPFKGLVRAMCKYNKEKEGQ.

Residues 1–265 (MKYIVVTGGV…TTRLMKHLKL (265 aa)) are amidoligase domain. CTP is bound at residue serine 12. Position 12 (serine 12) interacts with UTP. Position 13-18 (13-18 (GLGKGI)) interacts with ATP. Position 53 (tyrosine 53) interacts with L-glutamine. Position 70 (aspartate 70) interacts with ATP. Residues aspartate 70 and glutamate 140 each coordinate Mg(2+). CTP is bound by residues 147-149 (DIE), 186-191 (KTKPSQ), and lysine 222. Residues 186–191 (KTKPSQ) and lysine 222 contribute to the UTP site. In terms of domain architecture, Glutamine amidotransferase type-1 spans 289–530 (KLAIVGKYTN…VRAMCKYNKE (242 aa)). Glycine 352 is an L-glutamine binding site. The Nucleophile; for glutamine hydrolysis role is filled by cysteine 379. L-glutamine is bound by residues 380 to 383 (LGMQ), glutamate 403, and arginine 460. Residues histidine 503 and glutamate 505 contribute to the active site.

Belongs to the CTP synthase family. As to quaternary structure, homotetramer.

It carries out the reaction UTP + L-glutamine + ATP + H2O = CTP + L-glutamate + ADP + phosphate + 2 H(+). It catalyses the reaction L-glutamine + H2O = L-glutamate + NH4(+). The enzyme catalyses UTP + NH4(+) + ATP = CTP + ADP + phosphate + 2 H(+). It participates in pyrimidine metabolism; CTP biosynthesis via de novo pathway; CTP from UDP: step 2/2. With respect to regulation, allosterically activated by GTP, when glutamine is the substrate; GTP has no effect on the reaction when ammonia is the substrate. The allosteric effector GTP functions by stabilizing the protein conformation that binds the tetrahedral intermediate(s) formed during glutamine hydrolysis. Inhibited by the product CTP, via allosteric rather than competitive inhibition. In terms of biological role, catalyzes the ATP-dependent amination of UTP to CTP with either L-glutamine or ammonia as the source of nitrogen. Regulates intracellular CTP levels through interactions with the four ribonucleotide triphosphates. This chain is CTP synthase, found in Methanosarcina acetivorans (strain ATCC 35395 / DSM 2834 / JCM 12185 / C2A).